The sequence spans 172 residues: Nicotinamide-nucleotide adenylyltransferase (172 aa).

Belongs to the archaeal NMN adenylyltransferase family.

It localises to the cytoplasm. The enzyme catalyses beta-nicotinamide D-ribonucleotide + ATP + H(+) = diphosphate + NAD(+). It functions in the pathway cofactor biosynthesis; NAD(+) biosynthesis; NAD(+) from nicotinamide D-ribonucleotide: step 1/1. The sequence is that of Nicotinamide-nucleotide adenylyltransferase from Sulfurisphaera tokodaii (strain DSM 16993 / JCM 10545 / NBRC 100140 / 7) (Sulfolobus tokodaii).